The sequence spans 55 residues: MAKGKRDKIRMVSSAATGHFYTTDKNKKNTPGKMEMMKYDPVVRKHVMYKEGKIK.

Belongs to the bacterial ribosomal protein bL33 family.

This chain is Large ribosomal subunit protein bL33, found in Xanthomonas oryzae pv. oryzae (strain PXO99A).